A 218-amino-acid polypeptide reads, in one-letter code: Small ribosomal subunit protein uS3c (218 aa).

The region spanning Val-47–Ala-118 is the KH type-2 domain.

The protein belongs to the universal ribosomal protein uS3 family. Part of the 30S ribosomal subunit.

The protein resides in the plastid. It localises to the chloroplast. This Nicotiana tomentosiformis (Tobacco) protein is Small ribosomal subunit protein uS3c (rps3).